The sequence spans 95 residues: Small ribosomal subunit protein bS6 (95 aa).

Belongs to the bacterial ribosomal protein bS6 family.

Its function is as follows. Binds together with bS18 to 16S ribosomal RNA. The protein is Small ribosomal subunit protein bS6 of Desulfitobacterium hafniense (strain DSM 10664 / DCB-2).